Reading from the N-terminus, the 1002-residue chain is E3 ubiquitin-protein ligase BRE1B (1002 aa).

Residues 1–32 (MSGLSNKRAAGDGGSGPPEKKLNREEKTTTTL) are disordered. Residues 18–28 (PEKKLNREEKT) show a composition bias toward basic and acidic residues. Lys20 is subject to N6-acetyllysine. Ser42 is modified (phosphoserine). Residues 55–91 (KNKKLAERLEQRQACEDELRERIEKLEKRQATDDATL) are a coiled coil. A disordered region spans residues 120 to 148 (SSGTEVPGCQEGLTRDVIPRTDPGTSDLR). Coiled-coil stretches lie at residues 190-378 (KAAV…LRSL) and 438-526 (LQKK…ASGS). Lys356 and Lys518 each carry N6-acetyllysine. Disordered stretches follow at residues 520 to 562 (RAQA…PDSK) and 579 to 652 (KKEE…ESEL). Glycyl lysine isopeptide (Lys-Gly) (interchain with G-Cter in SUMO2) cross-links involve residues Lys579 and Lys580. A phosphoserine mark is found at Ser585 and Ser586. Composition is skewed to basic and acidic residues over residues 603–620 (RGREPEARPKRELREREG) and 634–652 (RADREKAKAEEARRKESEL). Residues 628 to 947 (AASTLSRADR…EEIKEYKARL (320 aa)) adopt a coiled-coil conformation. The segment at 949–988 (CPCCNTRKKDAVLTKCFHVFCFECVRGRYEARQRKCPKCN) adopts an RING-type zinc-finger fold.

This sequence belongs to the BRE1 family. As to quaternary structure, component of the RNF20/40 complex (also known as BRE1 complex) probably composed of 2 copies of RNF20/BRE1A and 2 copies of RNF40/BRE1B. Interacts with UBE2E1/UBCH6. Interacts with RB1 and WAC. May interact with STX1A. In terms of tissue distribution, ubiquitously expressed. Expressed in brain, testis, heart, liver and kidney. Weakly expressed in lung, spleen and skeletal muscle (at protein level).

The protein resides in the nucleus. The enzyme catalyses S-ubiquitinyl-[E2 ubiquitin-conjugating enzyme]-L-cysteine + [acceptor protein]-L-lysine = [E2 ubiquitin-conjugating enzyme]-L-cysteine + N(6)-ubiquitinyl-[acceptor protein]-L-lysine.. It participates in protein modification; protein ubiquitination. In terms of biological role, component of the RNF20/40 E3 ubiquitin-protein ligase complex that mediates monoubiquitination of 'Lys-120' of histone H2B (H2BK120ub1). H2BK120ub1 gives a specific tag for epigenetic transcriptional activation and is also prerequisite for histone H3 'Lys-4' and 'Lys-79' methylation (H3K4me and H3K79me, respectively). It thereby plays a central role in histone code and gene regulation. The RNF20/40 complex forms a H2B ubiquitin ligase complex in cooperation with the E2 enzyme UBE2A or UBE2B; reports about the cooperation with UBE2E1/UBCH are contradictory. Required for transcriptional activation of Hox genes. In Rattus norvegicus (Rat), this protein is E3 ubiquitin-protein ligase BRE1B (Rnf40).